The chain runs to 1462 residues: MGQIFPRSANPIPRPPRGLATHHWLNFLQAAYRLEPGPSSYDFHQLKTVLKMALETPVWMCPINYSLLASLLPKGYPGQVNEILQVLIQTQTQIPSHPAPPPPSSPTHDPPDSDPQIPPPYVEPTAPQVLPVMHPHGVPPTHRPWQMKDLQAIKQEVSQAAPGSPQFMQTIRLAVQQFDPTAKDLQDLLQYLCSSLVASLHHQQLDSLISEAETRGITGYNPLAGPLRVQANNPQQQGLRREYQQLWLTAFAALPGSAKDPSWASILQGLEEPYHTFVERLNVALDNGLPEGTPKDPILRSLAYSNANKECQKLLQARGHTNSPLGDMLRACQAWTPRDKTKVLVVQPKKPPPNQPCFRCGKAGHWSRDCAQPRPPPGPCPLCQDPTHWKRDCPRLKPAIPEPEPEEDALLLDLPADIPHPKNLHRGGGLTSPPTLRQVHPNKDPASILPVIPLDPARRPLIKAQVDTQTSHPRTIEALLDTGADMTVLPIALFSSDTPLKDTSVLGAGGQTQDHFKLTSLPVLIRLPFRTTPIVLTSCLVDTKNNWAIIGRDALQQCQGVLYLPEAKRPPVILPIQAPAVLGLEHLPRPPEISQFPLNPERLQALQHLVRKALEAGHIEPYTGPGNNPVFPVKKANGTWRFIHDLRATNSLTVDLSSSSPGPPDLSSLPTTLAHLQTIDLKDAFFQIPLPKQFQPYFAFTVPQQCNYGPGTRYAWKVLPQGFKNSPTLFEMQLASILQPIRQAFPQCVILQYMDDILLASPSPEDLQQLSEATMASLISHGLPVSQDKTQQTPGTIKFLGQIISPNHITYDAVPTVPIRSRWALPELQALLGEIQWVSKGTPTLRQPLHSLYCALQGHTDPRDQIYLNPSQVQSLMQLQQALSQNCRSRLAQTLPLLGAIMLTLTGTTTVVFQSKQQWPLVWLHAPLPHTSQCPWGQLLASAVLLLDKYTLQSYGLLCQTIHHNISIQTFNQFIQTSDHPSVPILLHHSHRFKNLGAQTGELWNTFLKTAAPLAPVKALTPVFTLSPIIINTAPCLFSDGSTSQAAYILWDKHILSQRSFPLPPPHKSAQQAELLGLLHGLSSARSWHCLNIFLDSKYLYHYLRTLALGTFQGKSSQAPFQALLPRLLAHKVIYLHHVRSHTNLPDPISKLNALTDALLITPILQLSPAELHSFTHCGQTALTLQGATTTEASNILRSCHACRKNNPQHQMPRGHIRRGLLPNHIWQGDITHFKYKNTLYRLHVWVDTFSGAISATQKRKETSSEAISSLLQAIAQLGKPSYINTDNGPAYISQDFLSMCTSLAIRHTTHVPYNPTSSGLVERSNGILKTLLYKYFTDRPDLPMDNALSIALWTINHLNVLTHCHKTRWQLHHSPRLQPIPETHSLISKQTHWYYFKLPGLNSRQWKGPQEALQEAAGAALIPVSANSAQWIPWRLLKQAACPRPAEGPADPKEKDHQHHG.

G2 is lipidated: N-myristoyl glycine; by host. The segment at 93 to 143 (QIPSHPAPPPPSSPTHDPPDSDPQIPPPYVEPTAPQVLPVMHPHGVPPTHR) is disordered. S105 bears the Phosphoserine; by host MAPK1 mark. The PPXY motif motif lies at 118–121 (PPPY). Positions 124–127 (PTAP) match the PTAP/PSAP motif motif. CCHC-type zinc fingers lie at residues 355–372 (QPCFRCGKAGHWSRDCAQ) and 378–395 (GPCPLCQDPTHWKRDCPR). A Peptidase A2 domain is found at 476–554 (IEALLDTGAD…NNWAIIGRDA (79 aa)). The For protease activity; shared with dimeric partner role is filled by D481. One can recognise a Reverse transcriptase domain in the interval 614–804 (LEAGHIEPYT…GTIKFLGQII (191 aa)). Mg(2+) contacts are provided by D680, D755, D756, D1040, E1074, D1096, D1157, D1230, and D1287. An RNase H type-1 domain is found at 1031 to 1165 (INTAPCLFSD…TDALLITPIL (135 aa)). The 170-residue stretch at 1219–1388 (RGLLPNHIWQ…QPIPETHSLI (170 aa)) folds into the Integrase catalytic domain. A DNA-binding region (integrase-type) is located at residues 1393-1443 (HWYYFKLPGLNSRQWKGPQEALQEAAGAALIPVSANSAQWIPWRLLKQAAC).

As to quaternary structure, homodimer; the homodimers are part of the immature particles. Interacts with human TSG101 and NEDD4; these interactions are essential for budding and release of viral particles. Homodimer; further assembles as homohexamers. It depends on Mg(2+) as a cofactor. In terms of processing, phosphorylation of the matrix protein p19 by MAPK1 seems to play a role in budding. Myristoylated. Myristoylation of the matrix (MA) domain mediates the transport and binding of Gag polyproteins to the host plasma membrane and is required for the assembly of viral particles. Post-translationally, specific enzymatic cleavages by the viral protease yield mature proteins. The polyprotein is cleaved during and after budding, this process is termed maturation. The protease is autoproteolytically processed at its N- and C-termini.

The protein resides in the virion. The catalysed reaction is Endonucleolytic cleavage to 5'-phosphomonoester.. It carries out the reaction DNA(n) + a 2'-deoxyribonucleoside 5'-triphosphate = DNA(n+1) + diphosphate. Functionally, the matrix domain targets Gag, Gag-Pro and Gag-Pro-Pol polyproteins to the plasma membrane via a multipartite membrane binding signal, that includes its myristoylated N-terminus. Its function is as follows. Matrix protein. Forms the spherical core of the virus that encapsulates the genomic RNA-nucleocapsid complex. In terms of biological role, binds strongly to viral nucleic acids and promote their aggregation. Also destabilizes the nucleic acids duplexes via highly structured zinc-binding motifs. Functionally, the aspartyl protease mediates proteolytic cleavages of Gag and Gag-Pol polyproteins during or shortly after the release of the virion from the plasma membrane. Cleavages take place as an ordered, step-wise cascade to yield mature proteins. This process is called maturation. Displays maximal activity during the budding process just prior to particle release from the cell (Potential). Cleaves the translation initiation factor eIF4G leading to the inhibition of host cap-dependent translation. Its function is as follows. RT is a multifunctional enzyme that converts the viral RNA genome into dsDNA in the cytoplasm, shortly after virus entry into the cell. This enzyme displays a DNA polymerase activity that can copy either DNA or RNA templates, and a ribonuclease H (RNase H) activity that cleaves the RNA strand of RNA-DNA heteroduplexes in a partially processive 3' to 5'-endonucleasic mode. Conversion of viral genomic RNA into dsDNA requires many steps. A tRNA-Pro binds to the primer-binding site (PBS) situated at the 5'-end of the viral RNA. RT uses the 3' end of the tRNA primer to perform a short round of RNA-dependent minus-strand DNA synthesis. The reading proceeds through the U5 region and ends after the repeated (R) region which is present at both ends of viral RNA. The portion of the RNA-DNA heteroduplex is digested by the RNase H, resulting in a ssDNA product attached to the tRNA primer. This ssDNA/tRNA hybridizes with the identical R region situated at the 3' end of viral RNA. This template exchange, known as minus-strand DNA strong stop transfer, can be either intra- or intermolecular. RT uses the 3' end of this newly synthesized short ssDNA to perform the RNA-dependent minus-strand DNA synthesis of the whole template. RNase H digests the RNA template except for a polypurine tract (PPT) situated at the 5' end of the genome. It is not clear if both polymerase and RNase H activities are simultaneous. RNase H probably can proceed both in a polymerase-dependent (RNA cut into small fragments by the same RT performing DNA synthesis) and a polymerase-independent mode (cleavage of remaining RNA fragments by free RTs). Secondly, RT performs DNA-directed plus-strand DNA synthesis using the PPT that has not been removed by RNase H as primer. PPT and tRNA primers are then removed by RNase H. The 3' and 5' ssDNA PBS regions hybridize to form a circular dsDNA intermediate. Strand displacement synthesis by RT to the PBS and PPT ends produces a blunt ended, linear dsDNA copy of the viral genome that includes long terminal repeats (LTRs) at both ends. Catalyzes viral DNA integration into the host chromosome, by performing a series of DNA cutting and joining reactions. The polypeptide is Gag-Pro-Pol polyprotein (gag-pro-pol) (Homo sapiens (Human)).